The chain runs to 105 residues: Nitrogen fixation nifHD2 region GlnB-like protein 1 (105 aa).

The protein belongs to the P(II) protein family.

In terms of biological role, could be involved in the regulation of nitrogen fixation. This Methanosarcina barkeri protein is Nitrogen fixation nifHD2 region GlnB-like protein 1.